The following is a 565-amino-acid chain: 2-isopropylmalate synthase (565 aa).

In terms of domain architecture, Pyruvate carboxyltransferase spans Pro37 to Asp312. Mg(2+) contacts are provided by Asp46, His251, His253, and Asn287. Residues Glu446 to Ser565 are regulatory domain.

Belongs to the alpha-IPM synthase/homocitrate synthase family. LeuA type 2 subfamily. Homodimer. Mg(2+) serves as cofactor.

The protein resides in the cytoplasm. It carries out the reaction 3-methyl-2-oxobutanoate + acetyl-CoA + H2O = (2S)-2-isopropylmalate + CoA + H(+). Its pathway is amino-acid biosynthesis; L-leucine biosynthesis; L-leucine from 3-methyl-2-oxobutanoate: step 1/4. Functionally, catalyzes the condensation of the acetyl group of acetyl-CoA with 3-methyl-2-oxobutanoate (2-ketoisovalerate) to form 3-carboxy-3-hydroxy-4-methylpentanoate (2-isopropylmalate). The polypeptide is 2-isopropylmalate synthase (Parafrankia sp. (strain EAN1pec)).